A 432-amino-acid chain; its full sequence is MSSTTLTDDQIRDNERTEVLAKATAAKNIVPDIAVLGTGPKNAILRAAADELVARSAEIIEANASDIEAGRANGMEESMIDRLALDESRIEGIAGGLRQVAGLTDPVGEVLRGHVMENGIQMKQVRVPLGVMGMVYEARPNVTVDAFALALKSGNVAFVRGSSTAVHSNTKLVEILQDVLERFELPRETVQLLPCQTRGSVQDLITARGLVDVVIPRGGAGLINAVVTGATVPTIETGTGNCHFYIDAEAKLGQAIAMVINGKTRRCSVCNATETALLDAALSDSDKLAVVQALQEAGVTIHGRVAELEAFGATDVVEATETDWDSEYLSFDIAVAVVDGVDGALAHIAKYSTKHTEAIATQNIETAQRFADRVDAAAVMINASTAYTDGEQYGMGAEIGISTQKLHARGPMALPELTSTKWILQGTGQIRP.

This sequence belongs to the gamma-glutamyl phosphate reductase family.

The protein resides in the cytoplasm. The enzyme catalyses L-glutamate 5-semialdehyde + phosphate + NADP(+) = L-glutamyl 5-phosphate + NADPH + H(+). Its pathway is amino-acid biosynthesis; L-proline biosynthesis; L-glutamate 5-semialdehyde from L-glutamate: step 2/2. In terms of biological role, catalyzes the NADPH-dependent reduction of L-glutamate 5-phosphate into L-glutamate 5-semialdehyde and phosphate. The product spontaneously undergoes cyclization to form 1-pyrroline-5-carboxylate. This Corynebacterium melassecola protein is Gamma-glutamyl phosphate reductase.